The chain runs to 113 residues: U11-theraphotoxin-Hhn1a (113 aa).

An N-terminal signal peptide occupies residues 1–21; sequence MNTVRVTFLLVFVLAVSLGQA. Residues 22 to 74 constitute a propeptide that is removed on maturation; sequence DKDENRMEMQEKTEQGNSYLDFAENLLLQKLEELEAKLLEEDSEESRNSRQKR. Residues 60 to 69 are compositionally biased toward basic and acidic residues; sequence LEEDSEESRN. The tract at residues 60–83 is disordered; that stretch reads LEEDSEESRNSRQKRCIGEGVPCD. 3 cysteine pairs are disulfide-bonded: cysteine 75–cysteine 90, cysteine 82–cysteine 95, and cysteine 89–cysteine 110.

Belongs to the neurotoxin 14 (magi-1) family. 01 (HNTX-16) subfamily. Expressed by the venom gland.

The protein localises to the secreted. Functionally, probable ion channel inhibitor. This is U11-theraphotoxin-Hhn1a from Cyriopagopus hainanus (Chinese bird spider).